The following is a 64-amino-acid chain: Toxin BmKIT3 (64 aa).

In terms of domain architecture, LCN-type CS-alpha/beta spans 1–61 (DGYIRGSNGC…TWKSESNTCG (61 aa)). Intrachain disulfides connect Cys-10–Cys-60, Cys-14–Cys-35, Cys-21–Cys-42, and Cys-25–Cys-44. Position 60 is a cysteine amide (Cys-60).

Belongs to the long (4 C-C) scorpion toxin superfamily. Sodium channel inhibitor family. Beta subfamily. As to expression, expressed by the venom gland.

Its subcellular location is the secreted. Depressant insect beta-toxins cause a transient contraction paralysis followed by a slow flaccid paralysis. They bind voltage-independently at site-4 of sodium channels (Nav) and shift the voltage of activation toward more negative potentials thereby affecting sodium channel activation and promoting spontaneous and repetitive firing. The chain is Toxin BmKIT3 from Olivierus martensii (Manchurian scorpion).